A 373-amino-acid polypeptide reads, in one-letter code: Queuine tRNA-ribosyltransferase (373 aa).

The Proton acceptor role is filled by Asp-89. Substrate is bound by residues 89-93 (DSGGF), Asp-143, Gln-192, and Gly-220. Residues 251 to 257 (GVGTPED) are RNA binding. Asp-270 functions as the Nucleophile in the catalytic mechanism. The segment at 275 to 279 (TRNAR) is RNA binding; important for wobble base 34 recognition. Zn(2+) contacts are provided by Cys-308, Cys-310, Cys-313, and His-339.

Belongs to the queuine tRNA-ribosyltransferase family. As to quaternary structure, homodimer. Within each dimer, one monomer is responsible for RNA recognition and catalysis, while the other monomer binds to the replacement base PreQ1. Requires Zn(2+) as cofactor.

It carries out the reaction 7-aminomethyl-7-carbaguanine + guanosine(34) in tRNA = 7-aminomethyl-7-carbaguanosine(34) in tRNA + guanine. Its pathway is tRNA modification; tRNA-queuosine biosynthesis. Functionally, catalyzes the base-exchange of a guanine (G) residue with the queuine precursor 7-aminomethyl-7-deazaguanine (PreQ1) at position 34 (anticodon wobble position) in tRNAs with GU(N) anticodons (tRNA-Asp, -Asn, -His and -Tyr). Catalysis occurs through a double-displacement mechanism. The nucleophile active site attacks the C1' of nucleotide 34 to detach the guanine base from the RNA, forming a covalent enzyme-RNA intermediate. The proton acceptor active site deprotonates the incoming PreQ1, allowing a nucleophilic attack on the C1' of the ribose to form the product. After dissociation, two additional enzymatic reactions on the tRNA convert PreQ1 to queuine (Q), resulting in the hypermodified nucleoside queuosine (7-(((4,5-cis-dihydroxy-2-cyclopenten-1-yl)amino)methyl)-7-deazaguanosine). This is Queuine tRNA-ribosyltransferase from Aliarcobacter butzleri (strain RM4018) (Arcobacter butzleri).